The chain runs to 105 residues: Small ribosomal subunit protein uS10c (105 aa).

This sequence belongs to the universal ribosomal protein uS10 family. In terms of assembly, part of the 30S ribosomal subunit.

It localises to the plastid. It is found in the chloroplast. Its function is as follows. Involved in the binding of tRNA to the ribosomes. This is Small ribosomal subunit protein uS10c from Porphyra purpurea (Red seaweed).